Here is a 334-residue protein sequence, read N- to C-terminus: Forkhead box protein N2 (334 aa).

Disordered stretches follow at residues 1–52 (MGPV…SGTT) and 83–108 (SPLY…ASSK). Residues 108-204 (KPPYSFSLLI…QALKKQPFSS (97 aa)) constitute a DNA-binding region (fork-head).

Its subcellular location is the nucleus. The chain is Forkhead box protein N2 from Xenopus tropicalis (Western clawed frog).